The following is a 273-amino-acid chain: Large ribosomal subunit protein uL2 (273 aa).

2 disordered regions span residues 28 to 53 (KPFA…TTRH) and 221 to 273 (RGTA…RRSK). Positions 39–48 (KSGGRNNNGR) are enriched in low complexity. Lys242 carries the post-translational modification N6-acetyllysine.

The protein belongs to the universal ribosomal protein uL2 family. Part of the 50S ribosomal subunit. Forms a bridge to the 30S subunit in the 70S ribosome.

Its function is as follows. One of the primary rRNA binding proteins. Required for association of the 30S and 50S subunits to form the 70S ribosome, for tRNA binding and peptide bond formation. It has been suggested to have peptidyltransferase activity; this is somewhat controversial. Makes several contacts with the 16S rRNA in the 70S ribosome. The chain is Large ribosomal subunit protein uL2 from Shigella dysenteriae serotype 1 (strain Sd197).